Reading from the N-terminus, the 217-residue chain is Pyridoxine/pyridoxamine 5'-phosphate oxidase (217 aa).

Substrate is bound by residues 14–17 (RKSY) and Lys-72. FMN-binding positions include 67–72 (RVVLIK), 82–83 (YT), Arg-88, and Lys-89. Residues Tyr-129, Arg-133, and Ser-137 each contribute to the substrate site. FMN contacts are provided by residues 146–147 (QS) and Trp-190. Residue 196–198 (RLH) participates in substrate binding. Arg-200 contributes to the FMN binding site.

The protein belongs to the pyridoxamine 5'-phosphate oxidase family. In terms of assembly, homodimer. FMN serves as cofactor.

It carries out the reaction pyridoxamine 5'-phosphate + O2 + H2O = pyridoxal 5'-phosphate + H2O2 + NH4(+). It catalyses the reaction pyridoxine 5'-phosphate + O2 = pyridoxal 5'-phosphate + H2O2. The protein operates within cofactor metabolism; pyridoxal 5'-phosphate salvage; pyridoxal 5'-phosphate from pyridoxamine 5'-phosphate: step 1/1. It functions in the pathway cofactor metabolism; pyridoxal 5'-phosphate salvage; pyridoxal 5'-phosphate from pyridoxine 5'-phosphate: step 1/1. Catalyzes the oxidation of either pyridoxine 5'-phosphate (PNP) or pyridoxamine 5'-phosphate (PMP) into pyridoxal 5'-phosphate (PLP). This Acidovorax sp. (strain JS42) protein is Pyridoxine/pyridoxamine 5'-phosphate oxidase.